A 192-amino-acid chain; its full sequence is Putative 3-methyladenine DNA glycosylase (192 aa).

It belongs to the DNA glycosylase MPG family.

The polypeptide is Putative 3-methyladenine DNA glycosylase (Bdellovibrio bacteriovorus (strain ATCC 15356 / DSM 50701 / NCIMB 9529 / HD100)).